The sequence spans 201 residues: Female-specific protein transformer (201 aa).

The interval 1–117 is disordered; sequence MDADSSSRSP…RSRSRSRTPR (117 aa). Over residues 9-37 the composition is skewed to basic and acidic residues; it reads SPRDTRTCARPKEKVPYFADEGRERDRVR. Basic residues-rich tracts occupy residues 38 to 62 and 99 to 115; these read NLRH…RARS and KQRR…RSRT.

It localises to the nucleus speckle. In terms of biological role, member of the regulatory pathway controlling female somatic sexual differentiation, regulated by Sxl. Activates dsx female-specific splicing by promoting the formation of a splicing enhancer complex which consists of tra, tra2 and sr proteins. The chain is Female-specific protein transformer (tra) from Drosophila hydei (Fruit fly).